Here is a 325-residue protein sequence, read N- to C-terminus: Natural cytotoxicity triggering receptor 1 (325 aa).

The N-terminal stretch at Met-1 to Ser-16 is a signal peptide. The Extracellular portion of the chain corresponds to Gln-17–Asn-255. Ig-like domains lie at Lys-34 to Thr-118 and Tyr-129 to Thr-211. A disulfide bridge links Cys-49 with Cys-98. N-linked (GlcNAc...) asparagine glycosylation is present at Asn-139. Cys-144 and Cys-190 form a disulfide bridge. 2 N-linked (GlcNAc...) asparagine glycosylation sites follow: Asn-216 and Asn-238. Residues Leu-256–Leu-273 form a helical membrane-spanning segment. Topologically, residues Thr-274–Leu-325 are cytoplasmic.

The protein belongs to the natural cytotoxicity receptor (NCR) family. In terms of assembly, interacts with CD3Z and FCER1G. In terms of tissue distribution, selectively expressed by NK cells.

The protein resides in the cell membrane. Its function is as follows. Cytotoxicity-activating receptor that may contribute to the increased efficiency of activated natural killer (NK) cells to mediate tumor cell lysis. This is Natural cytotoxicity triggering receptor 1 (Ncr1) from Mus musculus (Mouse).